The primary structure comprises 275 residues: Probable endonuclease 4 (275 aa).

Zn(2+) is bound by residues histidine 66, histidine 106, glutamate 140, aspartate 172, histidine 175, histidine 209, aspartate 222, histidine 224, and glutamate 254.

Belongs to the AP endonuclease 2 family. The cofactor is Zn(2+).

The enzyme catalyses Endonucleolytic cleavage to 5'-phosphooligonucleotide end-products.. Functionally, endonuclease IV plays a role in DNA repair. It cleaves phosphodiester bonds at apurinic or apyrimidinic (AP) sites, generating a 3'-hydroxyl group and a 5'-terminal sugar phosphate. This chain is Probable endonuclease 4, found in Halobacterium salinarum (strain ATCC 29341 / DSM 671 / R1).